Consider the following 2241-residue polypeptide: GON-4-like protein (2241 aa).

Disordered stretches follow at residues 1 to 46 and 122 to 259; these read MLPC…SSVS and KLHA…GRGQ. Positions 30 to 40 are enriched in basic and acidic residues; it reads SAVKPESDQVK. The span at 122 to 135 shows a compositional bias: basic residues; that stretch reads KLHATGSKRGKKMT. Over residues 143–152 the composition is skewed to basic and acidic residues; sequence QEDRCDHLTL. The span at 183–201 shows a compositional bias: polar residues; the sequence is PSGSQSAKPVSQPRKSTQP. The residue at position 206 (S206) is a Phosphoserine. Residues 243 to 255 are compositionally biased toward basic residues; that stretch reads RRKKKKGTKRKRD. S346 is subject to Phosphoserine. The span at 366-394 shows a compositional bias: acidic residues; that stretch reads EDDSSDEEYQPDDEEEDETAEESLLESDV. Residues 366–460 are disordered; it reads EDDSSDEEYQ…PPKPKQTRDS (95 aa). The segment at 600–1339 is required for interaction with YY1, SIN3A and HDAC1, and transcriptional repression activity; sequence EMGFSNMEDD…EEAREEISGS (740 aa). S775 carries the phosphoserine modification. 2 disordered regions span residues 1008–1031 and 1111–1131; these read PSPS…SEAP and RKPY…SPCM. Positions 1111–1125 are enriched in basic residues; sequence RKPYVRRRPSKRRGV. Phosphoserine is present on S1268. 2 disordered regions span residues 1301 to 1320 and 1356 to 1601; these read ALEP…TPGD and LDTG…RARA. Residues 1386–1416 are compositionally biased toward polar residues; sequence PTKTPSSSQEPPDEGTSGTDVNKGSSKNALS. At S1426 the chain carries Phosphoserine. Positions 1434–1443 are enriched in polar residues; sequence SSSVDGQSVG. Acidic residues-rich tracts occupy residues 1458-1476 and 1510-1534; these read EEEE…EDEM and GESE…EAEG. Over residues 1586 to 1600 the composition is skewed to basic residues; that stretch reads RNNHRARNKRGSRAR. PAH domains follow at residues 1624 to 1696 and 1706 to 1777; these read EQKD…LLPE and EQQA…FDHL. A disordered region spans residues 1809 to 1960; the sequence is PDVEEEEEPP…AVGSTLPSPR (152 aa). Composition is skewed to basic and acidic residues over residues 1836–1848 and 1879–1901; these read NHDK…DGAK and CDSK…HREA. Residues S1896, S1902, and S1977 each carry the phosphoserine modification. Disordered regions lie at residues 2002 to 2025, 2039 to 2149, and 2208 to 2241; these read EVRS…AVSE, EKLP…VSST, and CEAS…ELDE. A Phosphoserine modification is found at S2107. A compositionally biased stretch (polar residues) spans 2140-2149; it reads CANNSKVSST. The Myb-like domain maps to 2148 to 2201; that stretch reads STGEKVVLWTREADRVILTMCQEQGAQPQTFNIISQQLGNKTPAEVSHRFRELM.

Found in a complex with YY1, SIN3A and HDAC1.

The protein localises to the nucleus. Its function is as follows. Has transcriptional repressor activity, probably as part of a complex with YY1, SIN3A and HDAC1. Required for B cell lymphopoiesis. In Homo sapiens (Human), this protein is GON-4-like protein (GON4L).